We begin with the raw amino-acid sequence, 284 residues long: 2-dehydro-3-deoxyphosphooctonate aldolase (284 aa).

This sequence belongs to the KdsA family.

The protein resides in the cytoplasm. It carries out the reaction D-arabinose 5-phosphate + phosphoenolpyruvate + H2O = 3-deoxy-alpha-D-manno-2-octulosonate-8-phosphate + phosphate. It functions in the pathway carbohydrate biosynthesis; 3-deoxy-D-manno-octulosonate biosynthesis; 3-deoxy-D-manno-octulosonate from D-ribulose 5-phosphate: step 2/3. It participates in bacterial outer membrane biogenesis; lipopolysaccharide biosynthesis. This chain is 2-dehydro-3-deoxyphosphooctonate aldolase, found in Paraburkholderia phymatum (strain DSM 17167 / CIP 108236 / LMG 21445 / STM815) (Burkholderia phymatum).